A 674-amino-acid chain; its full sequence is Dystrophia myotonica WD repeat-containing protein (674 aa).

Ala2 is modified (N-acetylalanine). Disordered stretches follow at residues Gly31–Pro92 and Glu103–Gly122. Pro residues predominate over residues Pro53 to Pro65. Positions Ala66–Ala77 are enriched in low complexity. The segment covering Ser78–Ala90 has biased composition (pro residues). Low complexity predominate over residues Ala107–Gly118. WD repeat units lie at residues Ile211–Pro251, Val282–Leu321, Ser324–Arg363, Gly366–Gly409, and Ala413–His453. 4 disordered regions span residues Glu384–Ser419, Leu456–Thr516, Arg532–Leu573, and Asp637–Val674. Low complexity-rich tracts occupy residues Ala457–Gly478 and Pro487–Pro499. Ser495 is subject to Phosphoserine. Gly residues-rich tracts occupy residues Ala500 to Gly509 and Ser550 to Lys563. Omega-N-methylarginine is present on Arg551. The stretch at Ile601 to Glu638 is one WD 6 repeat. A compositionally biased stretch (polar residues) spans Ala642–Val674.

In terms of assembly, component of the USP12/DMWD/WDR48 deubiquitinating complex. Interacts with USP12; promotes its enzymatic activity. Interacts with USP46.

Its subcellular location is the cytoplasm. It localises to the nucleus. It is found in the perikaryon. The protein resides in the cell projection. The protein localises to the dendrite. Regulator of the deubiquitinating USP12/DMWD/WDR48 complex. Functions as a cofactor that promotes USP12 enzymatic activity. The chain is Dystrophia myotonica WD repeat-containing protein from Homo sapiens (Human).